The following is a 203-amino-acid chain: Amelogenin, Y isoform (203 aa).

An N-terminal signal peptide occupies residues 1 to 16 (MGTWILFACLVGAAFA). Residues 116-180 (MPVPGQQSMT…PPLPPMFPMR (65 aa)) form a disordered region. Residues 120 to 130 (GQQSMTPTQHH) show a composition bias toward polar residues. Residues 131–142 (QPNLPLPAQQPF) are compositionally biased toward low complexity. Over residues 143–180 (QPQPVQPLPHQPMQPQPPVQPMQPLLPQPPLPPMFPMR) the composition is skewed to pro residues.

The protein belongs to the amelogenin family.

The protein resides in the secreted. It localises to the extracellular space. The protein localises to the extracellular matrix. Its function is as follows. Plays a role in biomineralization. Seems to regulate the formation of crystallites during the secretory stage of tooth enamel development. Thought to play a major role in the structural organization and mineralization of developing enamel. This is Amelogenin, Y isoform (AMELY) from Pan troglodytes (Chimpanzee).